The following is a 598-amino-acid chain: Major royal jelly protein 5 (598 aa).

A signal peptide spans 1-17 (MTTWLLLVVCLGIACQG). Residues asparagine 148, asparagine 164, asparagine 181, and asparagine 324 are each glycosylated (N-linked (GlcNAc...) asparagine).

Belongs to the major royal jelly protein family. In terms of tissue distribution, found in and secreted from the hypopharyngeal glands of the worker honey bee (at protein level); expression peaks at 8 days post eclosion. Expressed in the brains of adult worker bees peaking at 12 days post eclosion (at protein level). Expressed in the spermatheca of adult queen bees (at protein level); Expression levels are higher in mated queens than in virgin queens. Expressed in the heads of worker bees after eclosion, expression dropping with age and detectable up to 26 days of age.

Its subcellular location is the secreted. In terms of biological role, component of royal jelly, a substance produced in the hypopharyngeal gland containing proteins, free amino acids, fatty acids, sugars and other nutrients, which is fed to developing larvae by worker nurse bees. Major royal jelly proteins (MRJPs) are high in essential amino acids and probably have a nutritional function in larval food. All larvae are fed some royal jelly (also known as worker jelly) early in their development but it forms the principal source of nutrition for larvae destined to become queen bees. Produced in the spermatheca of adult queen bees, along with other major royal jelly proteins, where it may act as a nutrient supply for sperm stored by mated queens, or be involved in energy metabolism. The sequence is that of Major royal jelly protein 5 from Apis mellifera (Honeybee).